The chain runs to 192 residues: NADH dehydrogenase [ubiquinone] iron-sulfur protein 3 (192 aa).

It belongs to the complex I 30 kDa subunit family. In terms of assembly, complex I is composed of about 45 different subunits. This is a component of the iron-sulfur (IP) fragment of the enzyme.

The protein resides in the mitochondrion inner membrane. It catalyses the reaction a ubiquinone + NADH + 5 H(+)(in) = a ubiquinol + NAD(+) + 4 H(+)(out). Core subunit of the mitochondrial membrane respiratory chain NADH dehydrogenase (Complex I) that is believed to belong to the minimal assembly required for catalysis. Complex I functions in the transfer of electrons from NADH to the respiratory chain. The immediate electron acceptor for the enzyme is believed to be ubiquinone. The polypeptide is NADH dehydrogenase [ubiquinone] iron-sulfur protein 3 (NAD9) (Beta trigyna (Caucasian wild beet)).